Here is an 824-residue protein sequence, read N- to C-terminus: MADRAEMFSLSTFHSLSPPGCRPPQDISLEEFDDEDLSEITDDCGLGLSYDSDHCEKDSLSLGRSEQPHPICSFQDDFQEFEMIDDNEEEDDEDEEEEEEEEEGDGEGQEGGDPGSEAPAPGPLIPSPSVEEPHKHRPTTLRLTTLGAQDSLNNNGGFDLVRPASWQETALCSPAPEALRELPGPLPATDTGPGGAQSPVRPGCDCEGNRPAEPPAPGGTSPSSDPGIEADLRSRSSGGRGGRRSSQELSSPGSDSEDAGGARLGRMISSISETELELSSDGGSSSSGRSSHLTNSIEEASSPASEPEPPREPPRRPAFLPVGPDDTNSEYESGSESEPDLSEDADSPWLLSNLVSRMISEGSSPIRCPGQCLSPAPRPPGEPVSPAGGAAQDSQDPEAAAGPGGVELVDMETLCAPPPPAPAAPRPGPAQPGPCLFLSNPTRDTITPLWAAPGRAARPGRACSAACSEEEDEEDDEEEEDAEDSAGSPGGRGTGPSAPRDASLVYDAVKYTLVVDEHTQLELVSLRRCAGLGHDSEEDSGGEASEEEAGAALLGGGQVSGDTSPDSPDLTFSKKFLNVFVNSTSRSSSTESFGLFSCLVNGEEREQTHRAVFRFIPRHPDELELDVDDPVLVEAEEDDFWFRGFNMRTGERGVFPAFYAHAVPGPAKDLLGSKRSPCWVERFDVQFLGSVEVPCHQGNGILCAAMQKIATARKLTVHLRPPASCDLEISLRGVKLSLSGGGPEFQRCSHFFQMKNISFCGCHPRNSCYFGFITKHPLLSRFACHVFVSQESMRPVAQSVGRAFLEYYQEHLAYACPTEDIYLE.

Disordered stretches follow at residues M1–S28, I40–L160, C172–W349, and E361–D501. Residues D77–E110 show a composition bias toward acidic residues. The interval E110–E275 is JNK-binding domain (JBD). The span at L141–G156 shows a compositional bias: polar residues. Positions G239–A498 are necessary for interaction with FGF13. Phosphoserine occurs at positions 254, 302, and 305. The segment covering I268–S305 has biased composition (low complexity). The span at T327–D346 shows a compositional bias: acidic residues. The span at A416–P432 shows a compositional bias: pro residues. Low complexity predominate over residues A451 to C467. Positions S468–D484 are enriched in acidic residues. The SH3 domain occupies E604–G665. The region spanning P677–A813 is the PID domain.

It belongs to the JIP scaffold family. In terms of assembly, forms homo- or heterooligomeric complexes. Binds specific components of the JNK signaling pathway namely JNK1, JNK2, JNK3, MAP2K7, MAP3K10, MAP3K11, MAP3K12 and MAPK13. Also binds the proline-rich domain-containing splice variant of apolipoprotein E receptor 2 (ApoER2). Binds the cytoplasmic tails of LRP1 and LRP2 (Megalin). Binds the TPR motif-containing C-terminal of kinesin light chain, Klc1, pre-assembled MAPK8IP1 scaffolding complexes are then transported as a cargo of kinesin, to the required subcellular location. Interacts with the cytoplasmic domain of APP. Interacts with DCLK2. Interacts with TIAM1 and TIAM2. Interacts with FGF13; enables the interaction with MAPK13 and may regulate the MAPK8IP2 scaffolding activity. Interacts with SH3RF2. As to expression, expressed mainly in the brain and pancreas, including insulin-secreting cells. In the nervous system, more abundantly expressed in the cerebellum, pituitary gland, occipital lobe and the amygdala. Also expressed in fetal brain. Very low levels found in uterus, ovary, prostate, colon, testis, adrenal gland, thyroid gland and salivary gland.

The protein localises to the cytoplasm. The JNK-interacting protein (JIP) group of scaffold proteins selectively mediates JNK signaling by aggregating specific components of the MAPK cascade to form a functional JNK signaling module. JIP2 inhibits IL1 beta-induced apoptosis in insulin-secreting cells. May function as a regulator of vesicle transport, through interactions with the JNK-signaling components and motor proteins. In Homo sapiens (Human), this protein is C-Jun-amino-terminal kinase-interacting protein 2 (MAPK8IP2).